A 499-amino-acid polypeptide reads, in one-letter code: Probable alpha-L-arabinofuranosidase B (499 aa).

A signal peptide spans M1 to S17. The interval A18 to V335 is catalytic. Disulfide bonds link C21-C31, C81-C86, and C176-C177. The N-linked (GlcNAc...) asparagine glycan is linked to N83. N-linked (GlcNAc...) asparagine glycosylation is present at N202. D219 is a binding site for substrate. The active-site Nucleophile is the E221. The substrate site is built by N222, N223, G296, H416, N418, F419, D435, H463, E465, L468, and D488. The interval G336–S499 is ABD. A disulfide bridge connects residues C401 and C439.

The protein belongs to the glycosyl hydrolase 54 family.

The protein localises to the secreted. The catalysed reaction is Hydrolysis of terminal non-reducing alpha-L-arabinofuranoside residues in alpha-L-arabinosides.. It participates in glycan metabolism; L-arabinan degradation. Alpha-L-arabinofuranosidase involved in the degradation of arabinoxylan, a major component of plant hemicellulose. Able to hydrolyze 1,5-, 1,3- and 1,2-alpha-linkages not only in L-arabinofuranosyl oligosaccharides, but also in polysaccharides containing terminal non-reducing L-arabinofuranoses in side chains, like L-arabinan, arabinogalactan and arabinoxylan. This chain is Probable alpha-L-arabinofuranosidase B (abfB), found in Aspergillus awamori (Black koji mold).